Here is a 323-residue protein sequence, read N- to C-terminus: Malate dehydrogenase (323 aa).

11-17 contacts NAD(+); sequence GAAGQIA. Arginine 92 and arginine 98 together coordinate substrate. NAD(+) contacts are provided by residues asparagine 105, glutamine 112, and 129 to 131; that span reads VGN. Positions 131 and 162 each coordinate substrate. The Proton acceptor role is filled by histidine 187.

It belongs to the LDH/MDH superfamily. MDH type 2 family.

It carries out the reaction (S)-malate + NAD(+) = oxaloacetate + NADH + H(+). In terms of biological role, catalyzes the reversible oxidation of malate to oxaloacetate. In Corynebacterium efficiens (strain DSM 44549 / YS-314 / AJ 12310 / JCM 11189 / NBRC 100395), this protein is Malate dehydrogenase.